A 205-amino-acid chain; its full sequence is Urease accessory protein UreG (205 aa).

Position 14–21 (14–21 (GPVGSGKT)) interacts with GTP.

In terms of assembly, homodimer. UreD, UreF and UreG form a complex that acts as a GTP-hydrolysis-dependent molecular chaperone, activating the urease apoprotein by helping to assemble the nickel containing metallocenter of UreC. The UreE protein probably delivers the nickel.

Its subcellular location is the cytoplasm. With respect to regulation, activation of apourease within the UreDFG-apoprotein complex is inhibited by zinc, copper and cobalt. Facilitates the functional incorporation of the urease nickel metallocenter. This process requires GTP hydrolysis, probably effectuated by UreG. The protein is Urease accessory protein UreG of Klebsiella aerogenes (Enterobacter aerogenes).